The chain runs to 191 residues: Ribonuclease HII (191 aa).

The region spanning 4 to 191 is the RNase H type-2 domain; the sequence is YTAAGLDEVG…HRKTFLSKIQ (188 aa). Residues D10, E11, and D106 each coordinate a divalent metal cation.

Belongs to the RNase HII family. It depends on Mn(2+) as a cofactor. Mg(2+) is required as a cofactor.

It localises to the cytoplasm. It carries out the reaction Endonucleolytic cleavage to 5'-phosphomonoester.. Endonuclease that specifically degrades the RNA of RNA-DNA hybrids. In Prochlorococcus marinus (strain SARG / CCMP1375 / SS120), this protein is Ribonuclease HII.